Consider the following 82-residue polypeptide: Protein MGF 110-5L (82 aa).

A signal peptide spans 1 to 28; sequence MLVIFLGILGLLANQVSSQLVGQLHPTE. Residue Asn62 is glycosylated (N-linked (GlcNAc...) asparagine; by host).

The protein belongs to the asfivirus MGF 110 family.

Plays a role in virus cell tropism, and may be required for efficient virus replication in macrophages. The protein is Protein MGF 110-5L of Ornithodoros (relapsing fever ticks).